The primary structure comprises 349 residues: N-acetyl-gamma-glutamyl-phosphate reductase (349 aa).

Cys152 is a catalytic residue.

It belongs to the NAGSA dehydrogenase family. Type 1 subfamily.

It localises to the cytoplasm. The enzyme catalyses N-acetyl-L-glutamate 5-semialdehyde + phosphate + NADP(+) = N-acetyl-L-glutamyl 5-phosphate + NADPH + H(+). It participates in amino-acid biosynthesis; L-arginine biosynthesis; N(2)-acetyl-L-ornithine from L-glutamate: step 3/4. Its function is as follows. Catalyzes the NADPH-dependent reduction of N-acetyl-5-glutamyl phosphate to yield N-acetyl-L-glutamate 5-semialdehyde. The protein is N-acetyl-gamma-glutamyl-phosphate reductase of Clavibacter sepedonicus (Clavibacter michiganensis subsp. sepedonicus).